The following is a 312-amino-acid chain: Copper chaperone for superoxide dismutase, chloroplastic (312 aa).

The transit peptide at 1-78 directs the protein to the chloroplast; it reads MVGFLRALTA…AAAAATADLS (78 aa). The region spanning 89 to 152 is the HMA domain; that stretch reads ELMTEFMVDM…TLHQTGRDAR (64 aa). Cys100, Cys103, Cys301, and Cys303 together coordinate Cu cation.

In the C-terminal section; belongs to the Cu-Zn superoxide dismutase family. Requires Cu(2+) as cofactor.

It is found in the plastid. The protein localises to the chloroplast. Its function is as follows. Copper chaperone for superoxide dismutases (SODs). Binds copper ions and delivers them specifically to SODs. Is required for assistance in SODs disulfide bond formation and thereby activation of SODs. The chain is Copper chaperone for superoxide dismutase, chloroplastic (CCS) from Oryza sativa subsp. japonica (Rice).